A 314-amino-acid chain; its full sequence is ATP synthase gamma chain (314 aa).

It belongs to the ATPase gamma chain family. In terms of assembly, F-type ATPases have 2 components, CF(1) - the catalytic core - and CF(0) - the membrane proton channel. CF(1) has five subunits: alpha(3), beta(3), gamma(1), delta(1), epsilon(1). CF(0) has three main subunits: a, b and c.

Its subcellular location is the cellular thylakoid membrane. Functionally, produces ATP from ADP in the presence of a proton gradient across the membrane. The gamma chain is believed to be important in regulating ATPase activity and the flow of protons through the CF(0) complex. The protein is ATP synthase gamma chain of Synechocystis sp. (strain ATCC 27184 / PCC 6803 / Kazusa).